The chain runs to 276 residues: Putative pyruvate, phosphate dikinase regulatory protein 2 (276 aa).

An ADP-binding site is contributed by 146-153 (GVSRTSKT).

The protein belongs to the pyruvate, phosphate/water dikinase regulatory protein family. PDRP subfamily.

The catalysed reaction is N(tele)-phospho-L-histidyl/L-threonyl-[pyruvate, phosphate dikinase] + ADP = N(tele)-phospho-L-histidyl/O-phospho-L-threonyl-[pyruvate, phosphate dikinase] + AMP + H(+). It carries out the reaction N(tele)-phospho-L-histidyl/O-phospho-L-threonyl-[pyruvate, phosphate dikinase] + phosphate + H(+) = N(tele)-phospho-L-histidyl/L-threonyl-[pyruvate, phosphate dikinase] + diphosphate. In terms of biological role, bifunctional serine/threonine kinase and phosphorylase involved in the regulation of the pyruvate, phosphate dikinase (PPDK) by catalyzing its phosphorylation/dephosphorylation. In Enterococcus faecalis (strain ATCC 700802 / V583), this protein is Putative pyruvate, phosphate dikinase regulatory protein 2.